Consider the following 339-residue polypeptide: Ketol-acid reductoisomerase (NADP(+)) (339 aa).

Residues 1–182 enclose the KARI N-terminal Rossmann domain; that stretch reads MKIYYEKDAD…GNTRAGVIET (182 aa). Residues 24-27, serine 51, serine 53, and 83-86 contribute to the NADP(+) site; these read YGSQ and DEKQ. Residue histidine 108 is part of the active site. Glycine 134 provides a ligand contact to NADP(+). The KARI C-terminal knotted domain occupies 183–328; sequence SFREETETDL…EKLRGMMHWA (146 aa). 4 residues coordinate Mg(2+): aspartate 191, glutamate 195, glutamate 227, and glutamate 231. Substrate is bound at residue serine 252.

The protein belongs to the ketol-acid reductoisomerase family. Requires Mg(2+) as cofactor.

It catalyses the reaction (2R)-2,3-dihydroxy-3-methylbutanoate + NADP(+) = (2S)-2-acetolactate + NADPH + H(+). It carries out the reaction (2R,3R)-2,3-dihydroxy-3-methylpentanoate + NADP(+) = (S)-2-ethyl-2-hydroxy-3-oxobutanoate + NADPH + H(+). It participates in amino-acid biosynthesis; L-isoleucine biosynthesis; L-isoleucine from 2-oxobutanoate: step 2/4. Its pathway is amino-acid biosynthesis; L-valine biosynthesis; L-valine from pyruvate: step 2/4. Its function is as follows. Involved in the biosynthesis of branched-chain amino acids (BCAA). Catalyzes an alkyl-migration followed by a ketol-acid reduction of (S)-2-acetolactate (S2AL) to yield (R)-2,3-dihydroxy-isovalerate. In the isomerase reaction, S2AL is rearranged via a Mg-dependent methyl migration to produce 3-hydroxy-3-methyl-2-ketobutyrate (HMKB). In the reductase reaction, this 2-ketoacid undergoes a metal-dependent reduction by NADPH to yield (R)-2,3-dihydroxy-isovalerate. In Hyphomonas neptunium (strain ATCC 15444), this protein is Ketol-acid reductoisomerase (NADP(+)).